We begin with the raw amino-acid sequence, 585 residues long: MNIFALFETRVREALESLTRSGRLPEGLDLSRVVVEPPRDASHGDLATNAALVLAKEAKQNPKALGEALAEELRTDPRIVEASVAGPGFINLRLAPEVFQDVIRAALSEGENFGRGQMPGGPVNIEYVSANPTGPMHVGHGRGAVFGDALANLLAAAGRPVTREYYINDAGAQVDVLARSAYLRYREALGETITIPEGLYPGDYLKPVGMRLAETHGRALLDQPEHEWLPQVRRFAIDAMMAMIREDLAAIGIRHDVFFSEATLQGENGGKVAELLDALRQKGLVYEGRLPPPKGQLPDDWEDREQTLFRSSQFGDDVDRALLKSDGSFTYFASDIAYHRDKWLRGANELIDVLGADHGGYVKRMQAAVKAVSDGQARLDVKLCQLVRLLRAGEPVKMSKRAGEFVTLRDVIDEVGRDAIRFMMLYRKNDATLDFDLAKVVEQSKDNPVFYVQYGHARRFSVLRQAREALPGEDFSPAALLADADLSVLTDPGEIEMMRLIAQYPRVLESAAAAHEPHRIAFYLYETASSLHSFWNKGKDLPQLRIVNPTDRNSTRARLALVEALGGVLASGLAVLGVSAPNEMR.

Residues 130-140 (ANPTGPMHVGH) carry the 'HIGH' region motif.

It belongs to the class-I aminoacyl-tRNA synthetase family. In terms of assembly, monomer.

The protein resides in the cytoplasm. It carries out the reaction tRNA(Arg) + L-arginine + ATP = L-arginyl-tRNA(Arg) + AMP + diphosphate. This is Arginine--tRNA ligase from Methylorubrum extorquens (strain CM4 / NCIMB 13688) (Methylobacterium extorquens).